A 65-amino-acid polypeptide reads, in one-letter code: Large ribosomal subunit protein bL35 (65 aa).

Disordered regions lie at residues 1 to 23 (MPKIKTNRAAAKRFKKTGSGKVK) and 29 to 48 (GSHILAKKSRKRKRDLRQSH). Residues 33–43 (LAKKSRKRKRD) are compositionally biased toward basic residues.

The protein belongs to the bacterial ribosomal protein bL35 family.

This chain is Large ribosomal subunit protein bL35, found in Desulfatibacillum aliphaticivorans.